We begin with the raw amino-acid sequence, 515 residues long: ATP synthase subunit alpha (515 aa).

Gly171 to Thr178 provides a ligand contact to ATP.

Belongs to the ATPase alpha/beta chains family. F-type ATPases have 2 components, CF(1) - the catalytic core - and CF(0) - the membrane proton channel. CF(1) has five subunits: alpha(3), beta(3), gamma(1), delta(1), epsilon(1). CF(0) has three main subunits: a(1), b(2) and c(9-12). The alpha and beta chains form an alternating ring which encloses part of the gamma chain. CF(1) is attached to CF(0) by a central stalk formed by the gamma and epsilon chains, while a peripheral stalk is formed by the delta and b chains.

The protein resides in the cell inner membrane. The enzyme catalyses ATP + H2O + 4 H(+)(in) = ADP + phosphate + 5 H(+)(out). Its function is as follows. Produces ATP from ADP in the presence of a proton gradient across the membrane. The alpha chain is a regulatory subunit. The sequence is that of ATP synthase subunit alpha from Xylella fastidiosa (strain Temecula1 / ATCC 700964).